We begin with the raw amino-acid sequence, 342 residues long: S-adenosylmethionine:tRNA ribosyltransferase-isomerase (342 aa).

This sequence belongs to the QueA family. Monomer.

It is found in the cytoplasm. The enzyme catalyses 7-aminomethyl-7-carbaguanosine(34) in tRNA + S-adenosyl-L-methionine = epoxyqueuosine(34) in tRNA + adenine + L-methionine + 2 H(+). It participates in tRNA modification; tRNA-queuosine biosynthesis. In terms of biological role, transfers and isomerizes the ribose moiety from AdoMet to the 7-aminomethyl group of 7-deazaguanine (preQ1-tRNA) to give epoxyqueuosine (oQ-tRNA). The chain is S-adenosylmethionine:tRNA ribosyltransferase-isomerase from Moorella thermoacetica (strain ATCC 39073 / JCM 9320).